We begin with the raw amino-acid sequence, 519 residues long: Exodeoxyribonuclease 7 large subunit (519 aa).

The disordered stretch occupies residues 493 to 519 (AISTGKSSNTNRKSAPAREPGKQGSLF). Over residues 496–505 (TGKSSNTNRK) the composition is skewed to polar residues.

It belongs to the XseA family. As to quaternary structure, heterooligomer composed of large and small subunits.

Its subcellular location is the cytoplasm. The catalysed reaction is Exonucleolytic cleavage in either 5'- to 3'- or 3'- to 5'-direction to yield nucleoside 5'-phosphates.. Its function is as follows. Bidirectionally degrades single-stranded DNA into large acid-insoluble oligonucleotides, which are then degraded further into small acid-soluble oligonucleotides. The sequence is that of Exodeoxyribonuclease 7 large subunit from Chelativorans sp. (strain BNC1).